Consider the following 175-residue polypeptide: ATP synthase subunit b (175 aa).

A helical transmembrane segment spans residues 13–33 (LLSPNPGLIFWTAVTFLLLLL).

The protein belongs to the ATPase B chain family. F-type ATPases have 2 components, F(1) - the catalytic core - and F(0) - the membrane proton channel. F(1) has five subunits: alpha(3), beta(3), gamma(1), delta(1), epsilon(1). F(0) has four main subunits: a(1), b(2) and c(10-14). The alpha and beta chains form an alternating ring which encloses part of the gamma chain. F(1) is attached to F(0) by a central stalk formed by the gamma and epsilon chains, while a peripheral stalk is formed by the delta and b chains.

It localises to the cell inner membrane. F(1)F(0) ATP synthase produces ATP from ADP in the presence of a proton or sodium gradient. F-type ATPases consist of two structural domains, F(1) containing the extramembraneous catalytic core and F(0) containing the membrane proton channel, linked together by a central stalk and a peripheral stalk. During catalysis, ATP synthesis in the catalytic domain of F(1) is coupled via a rotary mechanism of the central stalk subunits to proton translocation. Its function is as follows. Component of the F(0) channel, it forms part of the peripheral stalk, linking F(1) to F(0). This is ATP synthase subunit b from Chloroherpeton thalassium (strain ATCC 35110 / GB-78).